The sequence spans 75 residues: Conotoxin VnMSGL-0111 (75 aa).

An N-terminal signal peptide occupies residues 1-20 (MSGLEIMVLTLLLLVSMATS). Residues 21–44 (HQDGGEKQATQRDAINVRRRSITR) constitute a propeptide that is removed on maturation. 3 disulfides stabilise this stretch: Cys48–Cys60, Cys52–Cys69, and Cys59–Cys73.

Belongs to the conotoxin O3 superfamily. Expressed by the venom duct.

It localises to the secreted. The chain is Conotoxin VnMSGL-0111 from Conus ventricosus (Mediterranean cone).